The following is a 398-amino-acid chain: Ubiquitin-like modifier-activating enzyme 5 (398 aa).

ATP-binding residues include glycine 79, aspartate 100, lysine 123, asparagine 146, and asparagine 180. Positions 222 and 225 each coordinate Zn(2+). Cysteine 246 functions as the Glycyl thioester intermediate in the catalytic mechanism. Residues cysteine 299 and cysteine 304 each contribute to the Zn(2+) site. Residues 330-342 carry the UFM1-interacting sequence (UIS) motif; the sequence is VVHEDNEWGIELV. Positions 343-373 are linker; the sequence is SEVTEAELQDASGPIPDLPEGITVAYTIPEK. Residues 383–398 carry the UFC1-binding sequence (UFC) motif; sequence ETEQSLEELMAQMKKI.

It belongs to the ubiquitin-activating E1 family. UBA5 subfamily. In terms of assembly, homodimer; homodimerization is required for ufm1 activation. Interacts (via UIS motif) with ufm1; binds ufm1 via a trans-binding mechanism in which ufm1 interacts with distinct sites in both subunits of the uba5 homodimer. Interacts (via C-terminus) with ufc1.

It localises to the cytoplasm. It is found in the nucleus. The protein localises to the endoplasmic reticulum membrane. Its subcellular location is the golgi apparatus. E1-like enzyme which specifically catalyzes the first step in ufmylation. Activates ufm1 by first adenylating its C-terminal glycine residue with ATP, and thereafter linking this residue to the side chain of a cysteine residue in E1, yielding a ufm1-E1 thioester and free AMP. Activates ufm1 via a trans-binding mechanism, in which ufm1 interacts with distinct sites in both subunits of the uba5 homodimer. Trans-binding also promotes stabilization of the uba5 homodimer, and enhances ATP-binding. Transfer of ufm1 from uba5 to the E2-like enzyme UFC1 also takes place using a trans mechanism. Ufmylation plays a key role in various processes, such as ribosome recycling, response to DNA damage, interferon response or reticulophagy (also called ER-phagy). This chain is Ubiquitin-like modifier-activating enzyme 5, found in Danio rerio (Zebrafish).